The primary structure comprises 517 residues: Crotonobetaine/carnitine--CoA ligase (517 aa).

It belongs to the ATP-dependent AMP-binding enzyme family.

The catalysed reaction is 4-(trimethylamino)butanoate + ATP + CoA = 4-(trimethylamino)butanoyl-CoA + AMP + diphosphate. It catalyses the reaction crotonobetaine + ATP + CoA = crotonobetainyl-CoA + AMP + diphosphate. It carries out the reaction (R)-carnitine + ATP + CoA = (R)-carnitinyl-CoA + AMP + diphosphate. The protein operates within amine and polyamine metabolism; carnitine metabolism. Its function is as follows. Catalyzes the transfer of CoA to carnitine, generating the initial carnitinyl-CoA needed for the CaiB reaction cycle. Also has activity toward crotonobetaine and gamma-butyrobetaine. The sequence is that of Crotonobetaine/carnitine--CoA ligase from Escherichia coli O9:H4 (strain HS).